A 404-amino-acid chain; its full sequence is Formate-dependent phosphoribosylglycinamide formyltransferase (404 aa).

N(1)-(5-phospho-beta-D-ribosyl)glycinamide contacts are provided by residues 25-26 (EL) and Glu-85. ATP-binding positions include Arg-118, Lys-159, 164–169 (SSGKGQ), 199–202 (EGFI), and Glu-207. An ATP-grasp domain is found at 123 to 318 (RLAAEELGLP…EFELHARAIL (196 aa)). Mg(2+) is bound by residues Glu-277 and Glu-289. Residues Asp-296, Lys-365, and 372-373 (RR) contribute to the N(1)-(5-phospho-beta-D-ribosyl)glycinamide site.

It belongs to the PurK/PurT family. In terms of assembly, homodimer.

It carries out the reaction N(1)-(5-phospho-beta-D-ribosyl)glycinamide + formate + ATP = N(2)-formyl-N(1)-(5-phospho-beta-D-ribosyl)glycinamide + ADP + phosphate + H(+). Its pathway is purine metabolism; IMP biosynthesis via de novo pathway; N(2)-formyl-N(1)-(5-phospho-D-ribosyl)glycinamide from N(1)-(5-phospho-D-ribosyl)glycinamide (formate route): step 1/1. In terms of biological role, involved in the de novo purine biosynthesis. Catalyzes the transfer of formate to 5-phospho-ribosyl-glycinamide (GAR), producing 5-phospho-ribosyl-N-formylglycinamide (FGAR). Formate is provided by PurU via hydrolysis of 10-formyl-tetrahydrofolate. The chain is Formate-dependent phosphoribosylglycinamide formyltransferase from Burkholderia pseudomallei (strain 668).